A 1643-amino-acid polypeptide reads, in one-letter code: MAKVRAALERIRDPSVQTALSEAAYTHVRPVLKESLVNCPYALSNDEADCLESFGITVNPYANQTHTHAACKVIENRMLEIVGMHLPKHSCTMLFLKRSKLRYMRRAAILKDVFLNKDVEPKDLFRYDRDTIRSRLQDIDTKIAYMSDTLHFMSRREIVQLFEDSPKLETLLATVVLPVEALHKRTSLYPSLYSINYSAKGFEYIPGNHGGGSYFHPYTTLEWLKVRMINAEDFHKLSTGFILTFQLVESLGANHLFIVQKAKLLTPQMRTFCRDSLVTLPQVFCPAAMNANRPLSKTKAMQMLLYCKSVKQVTERDIYAKIRQIIPTSELELYDPDEIVHLANYFFFVSSLDSITCYEDLLSSDIWMRLTRPLRTAVRKFVELFKGKQDFDKLLIALKWQPFSYSLEPVDFTAYFVSRRVRTLAKMEDISWHQAAELARRLESEPDLLSWEDLCSKPIADPLASVSTPPLATLTSPAISESRVTDTSSPKLTNISVESILHPTSSNHATIAESLNPKFCGWTRGDFHHMIVNQPSDRLKGCRSWSYTTSPDVDLMLENLLLTPIPWESRLSDILLTLNTPANACCIQILDCSAASAWVDWSVQPIKTFPVAFVGMGETTLTFEDDSTLPLKEGEFVFFPPEWLARHKYQIKTASNLHLCATFLVLDTTLLGETLANNCIEPEPLRPTASRKSCQPTPSVDKSGADSPPEKQIVTPIVDAAVLSCRPKLQDVTKPTKVLMAAETSDSVADSLPWASWVNLLQKHGFKGNQQQIAQDGQLIIPISDIRKLPHIPFPEEVPETLRETLKNIKRFPVEITMQHKRAGSYDSDIKNNRTGKLLSQMDNKWKAAFAYKLQQEDRKVCGTIIHGCGGSGKSFAIQEWMRSLKEDQSVVTVVTPTVLLRNDWQTKLPILPADVFKTFEKSVIQPCNPILVFDDYTKLPPGLIESVVMHHQNVVFIILTGDNRQSVYHETNPEAYIAALPEAVEIFSPYCEFYLNATHRNVKDLANKLGVYSEREGKLKVNFASHHLKASRIPMLVPSTMKRNAMFDMGHHSMTYAGCQGLTAPKIQILLDNHTQFCSERVLYTCLSRAVDRIHFINTGPTTGDYWAKLESTPYLKAFIDTYRDEKTEVYNSQPASAEPTEPEAPATHFPTAPKPLLEPLVEKLTDKEAREIFSPAFGHSNAIQTEDSVVQLFQHQQAKDETLYWATIDTRLAISTPEANLREFNMKRDIGDILFMNYAKLMCLPPEPVPFEERLWKISADEVRNTYISKPIGNLVNAASRQSPDFPKNKIALFLKSQWVKKTEKLGTLKVKPGQTIASFMQETVMLYGTMARYLRKMRRRFQPDNIFINCETTPEDLDKFIKSQWDFSRPAHTNDFTAFDQSQDGAMLQFEVIKAKFFNIPAEIIEGYIYIKLNAAIFLGTLGIMRLSGEGPTFDANTECSIAYNATRFHITDDTAQVYAGDDMALDRVSIEKDSFNRLEKQLKLTSKPMFPKQVKGDYAEFCGWVMTPAGIIKHSLKMHASIQLQKKINNIKESARSYALDLRYAYKLGDELQEHLNEVEADYHQQSVRDMHLLHQQDVLNKGSASPPHVFEKTADANTAGSSKTHKRNALKKKKQTRIAEILPSPDATGLSSLPFRFF.

The Alphavirus-like MT domain maps to 59 to 224; sequence NPYANQTHTH…FHPYTTLEWL (166 aa). The segment at 686-711 is disordered; sequence RPTASRKSCQPTPSVDKSGADSPPEK. Over residues 690 to 700 the composition is skewed to polar residues; sequence SRKSCQPTPSV. Positions 828–996 constitute a (+)RNA virus helicase ATP-binding domain; that stretch reads SDIKNNRTGK…IFSPYCEFYL (169 aa). Position 868-875 (868-875) interacts with ATP; the sequence is GCGGSGKS. The (+)RNA virus helicase C-terminal domain maps to 997 to 1132; that stretch reads NATHRNVKDL…TYRDEKTEVY (136 aa). The segment at 1131-1155 is disordered; that stretch reads VYNSQPASAEPTEPEAPATHFPTAP. The span at 1136–1155 shows a compositional bias: low complexity; that stretch reads PASAEPTEPEAPATHFPTAP. The RdRp catalytic domain maps to 1372 to 1479; sequence RPAHTNDFTA…DRVSIEKDSF (108 aa). Residues 1587–1620 are disordered; that stretch reads GSASPPHVFEKTADANTAGSSKTHKRNALKKKKQ. Over residues 1608–1620 the composition is skewed to basic residues; sequence KTHKRNALKKKKQ.

The protein belongs to the potexvirus/carlavirus RNA replication protein family.

It carries out the reaction RNA(n) + a ribonucleoside 5'-triphosphate = RNA(n+1) + diphosphate. The catalysed reaction is ATP + H2O = ADP + phosphate + H(+). RNA replication. The central part of this protein possibly functions as an ATP-binding helicase. This chain is RNA replication protein, found in Narcissus pseudonarcissus (Daffodil).